Reading from the N-terminus, the 225-residue chain is PKHD-type hydroxylase YbiX (225 aa).

In terms of domain architecture, Fe2OG dioxygenase spans 78–177 (TLSTPLFNRY…RVASFMWIQS (100 aa)). The Fe cation site is built by histidine 96, aspartate 98, and histidine 158. Arginine 168 contributes to the 2-oxoglutarate binding site.

Fe(2+) is required as a cofactor. Requires L-ascorbate as cofactor.

This chain is PKHD-type hydroxylase YbiX, found in Escherichia coli O6:H1 (strain CFT073 / ATCC 700928 / UPEC).